The primary structure comprises 296 residues: Formamidopyrimidine-DNA glycosylase (296 aa).

Proline 2 functions as the Schiff-base intermediate with DNA in the catalytic mechanism. Residue glutamate 3 is the Proton donor of the active site. The Proton donor; for beta-elimination activity role is filled by lysine 58. Histidine 104, arginine 126, and lysine 169 together coordinate DNA. Residues serine 260–lysine 296 form an FPG-type zinc finger. The active-site Proton donor; for delta-elimination activity is the arginine 286.

The protein belongs to the FPG family. In terms of assembly, monomer. The cofactor is Zn(2+).

The catalysed reaction is Hydrolysis of DNA containing ring-opened 7-methylguanine residues, releasing 2,6-diamino-4-hydroxy-5-(N-methyl)formamidopyrimidine.. It catalyses the reaction 2'-deoxyribonucleotide-(2'-deoxyribose 5'-phosphate)-2'-deoxyribonucleotide-DNA = a 3'-end 2'-deoxyribonucleotide-(2,3-dehydro-2,3-deoxyribose 5'-phosphate)-DNA + a 5'-end 5'-phospho-2'-deoxyribonucleoside-DNA + H(+). Involved in base excision repair of DNA damaged by oxidation or by mutagenic agents. Acts as a DNA glycosylase that recognizes and removes damaged bases. Has a preference for oxidized purines, such as 7,8-dihydro-8-oxoguanine (8-oxoG). Has AP (apurinic/apyrimidinic) lyase activity and introduces nicks in the DNA strand. Cleaves the DNA backbone by beta-delta elimination to generate a single-strand break at the site of the removed base with both 3'- and 5'-phosphates. This Rhizobium etli (strain ATCC 51251 / DSM 11541 / JCM 21823 / NBRC 15573 / CFN 42) protein is Formamidopyrimidine-DNA glycosylase.